Here is a 411-residue protein sequence, read N- to C-terminus: S-inosyl-L-homocysteine hydrolase (411 aa).

2 residues coordinate substrate: Asp121 and Glu146. 147–149 (TTT) provides a ligand contact to NAD(+). Positions 176 and 180 each coordinate substrate. NAD(+)-binding positions include Asn181, 210 to 215 (GYGWCG), Glu233, Asn268, 289 to 291 (SGH), and Asn335.

The protein belongs to the adenosylhomocysteinase family. Requires NAD(+) as cofactor.

It localises to the cytoplasm. The enzyme catalyses S-inosyl-L-homocysteine + H2O = L-homocysteine + inosine. It participates in amino-acid biosynthesis; S-adenosyl-L-methionine biosynthesis. In terms of biological role, catalyzes the hydrolysis of S-inosyl-L-homocysteine (SIH) to L-homocysteine (Hcy) and inosine. Likely functions in a S-adenosyl-L-methionine (SAM) recycling pathway from S-adenosyl-L-homocysteine (SAH) produced from SAM-dependent methylation reactions. Can also catalyze the reverse reaction in vitro, i.e. the synthesis of SIH from Hcy and inosine. The chain is S-inosyl-L-homocysteine hydrolase from Methanosarcina acetivorans (strain ATCC 35395 / DSM 2834 / JCM 12185 / C2A).